The chain runs to 328 residues: Protein FAM76B (328 aa).

Residues 143–232 form a disordered region; it reads KEQRKGLGSS…ITQSMDSGGT (90 aa). Over residues 148–159 the composition is skewed to low complexity; sequence GLGSSHSNSSSL. Residues 165-183 show a composition bias toward basic residues; it reads QRHHHHHQHHRHGSSHHKI. The segment covering 185–201 has biased composition (polar residues); it reads GNLSPEQDQGLWKQSIQ. Residue Ser-188 is modified to Phosphoserine. The segment covering 203–213 has biased composition (basic and acidic residues); the sequence is ETPKKKPKLET. A compositionally biased stretch (polar residues) spans 216–232; sequence SNGDSSSITQSMDSGGT. Positions 237-316 form a coiled coil; sequence LISQLKEEVM…KQVAALSKGK (80 aa).

This sequence belongs to the FAM76 family. In terms of tissue distribution, highly expressed in hematopoietic and immune systems including in the thymus, spleen, kidney, and blood vessel.

Functionally, plays a role in hematopoiesis and immune system development, and participates in the inflammatory response. The sequence is that of Protein FAM76B (fam76b) from Danio rerio (Zebrafish).